The sequence spans 209 residues: LexA repressor (209 aa).

Residues 28–48 constitute a DNA-binding region (H-T-H motif); the sequence is RVELAKILGFRSANAAEEHLK. Catalysis depends on for autocatalytic cleavage activity residues S126 and K163.

It belongs to the peptidase S24 family. As to quaternary structure, homodimer.

The catalysed reaction is Hydrolysis of Ala-|-Gly bond in repressor LexA.. Its function is as follows. Represses a number of genes involved in the response to DNA damage (SOS response), including recA and lexA. In the presence of single-stranded DNA, RecA interacts with LexA causing an autocatalytic cleavage which disrupts the DNA-binding part of LexA, leading to derepression of the SOS regulon and eventually DNA repair. The protein is LexA repressor of Psychromonas ingrahamii (strain DSM 17664 / CCUG 51855 / 37).